The primary structure comprises 689 residues: Glycine--tRNA ligase beta subunit (689 aa).

It belongs to the class-II aminoacyl-tRNA synthetase family. In terms of assembly, tetramer of two alpha and two beta subunits.

The protein localises to the cytoplasm. The catalysed reaction is tRNA(Gly) + glycine + ATP = glycyl-tRNA(Gly) + AMP + diphosphate. The protein is Glycine--tRNA ligase beta subunit of Shigella flexneri serotype 5b (strain 8401).